Consider the following 237-residue polypeptide: Protein PetR (237 aa).

The region spanning 8 to 121 (HLLIVDDDER…ELLLRINAIL (114 aa)) is the Response regulatory domain. The residue at position 57 (aspartate 57) is a 4-aspartylphosphate. Residues 77 to 95 (ATPILLLTARGETRERIEG) constitute a DNA-binding region (H-T-H motif). The segment at residues 132-236 (PKYLSLGPLR…VRGLGYMLAP (105 aa)) is a DNA-binding region (ompR/PhoB-type).

Necessary for photosynthetic and respiratory growth. Probable promoter-specific protein mediating the interaction between DNA and RNA polymerase. The chain is Protein PetR (petR) from Rhodobacter capsulatus (strain ATCC BAA-309 / NBRC 16581 / SB1003).